A 472-amino-acid chain; its full sequence is Kynureninase 1 (472 aa).

Pyridoxal 5'-phosphate is bound by residues L146, T147, 174–177 (FPSD), S231, D260, H263, and Y285. An N6-(pyridoxal phosphate)lysine modification is found at K286. W326 and N354 together coordinate pyridoxal 5'-phosphate.

It belongs to the kynureninase family. As to quaternary structure, homodimer. The cofactor is pyridoxal 5'-phosphate.

Its subcellular location is the cytoplasm. It carries out the reaction L-kynurenine + H2O = anthranilate + L-alanine + H(+). The enzyme catalyses 3-hydroxy-L-kynurenine + H2O = 3-hydroxyanthranilate + L-alanine + H(+). It functions in the pathway amino-acid degradation; L-kynurenine degradation; L-alanine and anthranilate from L-kynurenine: step 1/1. The protein operates within cofactor biosynthesis; NAD(+) biosynthesis; quinolinate from L-kynurenine: step 2/3. Functionally, catalyzes the cleavage of L-kynurenine (L-Kyn) and L-3-hydroxykynurenine (L-3OHKyn) into anthranilic acid (AA) and 3-hydroxyanthranilic acid (3-OHAA), respectively. This chain is Kynureninase 1 (bna5-1), found in Aspergillus niger (strain ATCC MYA-4892 / CBS 513.88 / FGSC A1513).